The following is a 1588-amino-acid chain: Pentafunctional AROM polypeptide (1588 aa).

The segment at 1 to 392 is 3-dehydroquinate synthase; sequence MVQLAKVPIL…YGDSAQFVSD (392 aa). NAD(+) contacts are provided by residues 43–45, 78–81, 109–111, and Asp-114; these read DTN, ETSK, and GGV. Position 125 (Arg-125) interacts with 7-phospho-2-dehydro-3-deoxy-D-arabino-heptonate. Position 134–135 (134–135) interacts with NAD(+); it reads TS. 7-phospho-2-dehydro-3-deoxy-D-arabino-heptonate-binding residues include Asp-141 and Lys-147. Lys-156 contributes to the NAD(+) binding site. Position 157 (Asn-157) interacts with 7-phospho-2-dehydro-3-deoxy-D-arabino-heptonate. NAD(+) contacts are provided by residues 174-177 and Asn-185; that span reads WLET. Residue Glu-189 participates in Zn(2+) binding. 7-phospho-2-dehydro-3-deoxy-D-arabino-heptonate-binding positions include 189–192 and Lys-258; that span reads EVIK. The active-site Proton acceptor; for 3-dehydroquinate synthase activity is the Glu-268. 7-phospho-2-dehydro-3-deoxy-D-arabino-heptonate contacts are provided by residues 272-276 and His-279; that span reads RNLLN. His-279 is a Zn(2+) binding site. The active-site Proton acceptor; for 3-dehydroquinate synthase activity is His-283. 7-phospho-2-dehydro-3-deoxy-D-arabino-heptonate is bound by residues His-295 and Lys-364. Position 295 (His-295) interacts with Zn(2+). Positions 405 to 871 are EPSP synthase; it reads VYPFKDIPAD…WDVLHSELGA (467 aa). The active-site For EPSP synthase activity is the Cys-853. The segment at 890-1080 is shikimate kinase; sequence SVVIIGMRAA…IPSGRSAFVC (191 aa). 895–902 serves as a coordination point for ATP; the sequence is GMRAAGKT. Positions 1081 to 1293 are 3-dehydroquinase; the sequence is LTFDDLTEQT…AAPGQLTVAQ (213 aa). His-1198 functions as the Proton acceptor; for 3-dehydroquinate dehydratase activity in the catalytic mechanism. The active-site Schiff-base intermediate with substrate; for 3-dehydroquinate dehydratase activity is the Lys-1227. Positions 1306–1588 are shikimate dehydrogenase; that stretch reads PKELFVVGKP…KAIFDAVTKE (283 aa).

This sequence in the N-terminal section; belongs to the sugar phosphate cyclases superfamily. Dehydroquinate synthase family. The protein in the 2nd section; belongs to the EPSP synthase family. It in the 3rd section; belongs to the shikimate kinase family. In the 4th section; belongs to the type-I 3-dehydroquinase family. This sequence in the C-terminal section; belongs to the shikimate dehydrogenase family. In terms of assembly, homodimer. Requires Zn(2+) as cofactor.

The protein localises to the cytoplasm. The enzyme catalyses 7-phospho-2-dehydro-3-deoxy-D-arabino-heptonate = 3-dehydroquinate + phosphate. It carries out the reaction 3-dehydroquinate = 3-dehydroshikimate + H2O. It catalyses the reaction shikimate + NADP(+) = 3-dehydroshikimate + NADPH + H(+). The catalysed reaction is shikimate + ATP = 3-phosphoshikimate + ADP + H(+). The enzyme catalyses 3-phosphoshikimate + phosphoenolpyruvate = 5-O-(1-carboxyvinyl)-3-phosphoshikimate + phosphate. It participates in metabolic intermediate biosynthesis; chorismate biosynthesis; chorismate from D-erythrose 4-phosphate and phosphoenolpyruvate: step 2/7. Its pathway is metabolic intermediate biosynthesis; chorismate biosynthesis; chorismate from D-erythrose 4-phosphate and phosphoenolpyruvate: step 3/7. It functions in the pathway metabolic intermediate biosynthesis; chorismate biosynthesis; chorismate from D-erythrose 4-phosphate and phosphoenolpyruvate: step 4/7. The protein operates within metabolic intermediate biosynthesis; chorismate biosynthesis; chorismate from D-erythrose 4-phosphate and phosphoenolpyruvate: step 5/7. It participates in metabolic intermediate biosynthesis; chorismate biosynthesis; chorismate from D-erythrose 4-phosphate and phosphoenolpyruvate: step 6/7. The AROM polypeptide catalyzes 5 consecutive enzymatic reactions in prechorismate polyaromatic amino acid biosynthesis. The sequence is that of Pentafunctional AROM polypeptide from Saccharomyces cerevisiae (strain JAY291) (Baker's yeast).